A 343-amino-acid chain; its full sequence is Probable 3',5'-cyclic-nucleotide phosphodiesterase (343 aa).

The N-terminal stretch at 1 to 36 (MKYLSIKSASDKIKSGLLKTGVILSFSLFSSLSTAA) is a signal peptide.

This sequence belongs to the cyclic nucleotide phosphodiesterase class-II family.

It localises to the periplasm. It catalyses the reaction a nucleoside 3',5'-cyclic phosphate + H2O = a nucleoside 5'-phosphate + H(+). The protein is Probable 3',5'-cyclic-nucleotide phosphodiesterase (cpdP) of Yersinia pestis.